A 323-amino-acid polypeptide reads, in one-letter code: CYFIP-related Rac1 interactor A (323 aa).

The protein belongs to the CYRI family.

The protein localises to the membrane. May negatively regulate RAC1 signaling and RAC1-driven cytoskeletal remodeling. May regulate chemotaxis, cell migration and epithelial polarization by controlling the polarity, plasticity, duration and extent of protrusions. This is CYFIP-related Rac1 interactor A (CYRIA) from Gallus gallus (Chicken).